The sequence spans 1872 residues: Plexin-A3 (1872 aa).

A signal peptide spans 1 to 19 (MPTVCLLPLLFFTIGGCLG). The 470-residue stretch at 20 to 489 (SSRPFRTFVV…SEKQVSQLPV (470 aa)) folds into the Sema domain. Residues 20–1220 (SSRPFRTFVV…ITADRALTLP (1201 aa)) lie on the Extracellular side of the membrane. N-linked (GlcNAc...) asparagine glycosylation occurs at Asn-60. 9 disulfide bridges follow: Cys-78/Cys-87, Cys-113/Cys-121, Cys-267/Cys-388, Cys-283/Cys-339, Cys-357/Cys-376, Cys-492/Cys-509, Cys-498/Cys-540, Cys-501/Cys-518, and Cys-512/Cys-524. The N-linked (GlcNAc...) asparagine glycan is linked to Asn-549. The cysteines at positions 575 and 595 are disulfide-linked. 4 consecutive IPT/TIG domains span residues 841 to 934 (PRIT…YSFV), 936 to 1021 (PTFD…YTYT), 1024 to 1123 (PTVT…FTYY), and 1126 to 1212 (PSFE…LHIT). Asn-1163 is a glycosylation site (N-linked (GlcNAc...) asparagine). Residues 1221 to 1241 (AMVGLAAGGGLLLLAITVVLV) form a helical membrane-spanning segment. The stretch at 1240 to 1294 (LVAYKRKTQDADRTLKRLQLQMDNLESRVALECKEAFAELQTDINELTNHMDGVQ) forms a coiled coil. At 1242–1872 (AYKRKTQDAD…QIITLVSSSS (631 aa)) the chain is on the cytoplasmic side. The residue at position 1597 (Ser-1597) is a Phosphoserine.

The protein belongs to the plexin family. Detected in embryonic hindbrain, spinal cord, dorsal root ganglion, trigeminal ganglion and superior cervical ganglion. In newborns, detected throughout all layers of the hippocampus.

It localises to the cell membrane. Its function is as follows. Coreceptor for SEMA3A and SEMA3F. Necessary for signaling by class 3 semaphorins and subsequent remodeling of the cytoskeleton. Plays a role in axon guidance in the developing nervous system. Regulates the migration of sympathetic neurons, but not of neural crest precursors. Required for normal dendrite spine morphology in pyramidal neurons. May play a role in regulating semaphorin-mediated programmed cell death in the developing nervous system. Class 3 semaphorins bind to a complex composed of a neuropilin and a plexin. The plexin modulates the affinity of the complex for specific semaphorins, and its cytoplasmic domain is required for the activation of down-stream signaling events in the cytoplasm. The sequence is that of Plexin-A3 (Plxna3) from Mus musculus (Mouse).